The sequence spans 489 residues: MNGTMDHPDHPDPDSIKMFVGQVPRSWSEKELRELFEQYGAVYEINVLRDRSQNPPQSKGCCFITFYTRKAALEAQNALHNMKVLPGMHHPIQMKPADSEKNNAVEDRKLFIGMVSKNCNENDIRAMFSPFGQIEECRILRGPDGMSRGCAFVTFTTRSMAQMAIKSMHQAQTMEGCSSPIVVKFADTQKDKEQKRMTQQLQQQMQQLNAASMWGNLTGLNSLAPQYLALLQQTASSGNLNSLSGLHPMGAEYGTGMTSGLNAIQLQNLAALAAAASAAQNTPSAGAALTSSSSPLSILTSSGSSPSSNNSSINTMASLGALQTLAGATAGLNVNSLAGMAAFNGGLGSSLSNGTGSTMEALSQAYSGIQQYAAAALPSLYNQSLLSQQGLGAAGSQKEGPEGANLFIYHLPQEFGDQDLLQMFMPFGNVVSSKVFIDKQTNLSKCFGFVSYDNPVSAQAAIQSMNGFQIGMKRLKVQLKRSKNDSKPY.

3 consecutive RRM domains span residues Ile16–Ser99, Arg108–Thr188, and Ala404–Ser482. Residues Val183–Ala210 are necessary for oligomerization and EDEN-dependent deadenylation.

This sequence belongs to the CELF/BRUNOL family. As to quaternary structure, oligomer. Oligomerization is required for RNA-binding and EDEN-dependent deadenylation. In terms of processing, phosphorylated during oocyte maturation and dephosphorylated following egg activation. Dephosphorylation is calcium dependent and correlates with the increase in the activity of EDEN-dependent deadenylation.

The protein localises to the nucleus. It localises to the cytoplasm. Functionally, RNA-binding protein implicated in the regulation of several post-transcriptional events. May be involved in pre-mRNA alternative splicing, mRNA translation activation and stability. Mediates the rapid and sequence-specific cytoplasmic deadenylation of EDEN-containing maternal mRNAs following fertilization. Binds to AU-rich sequences (AREs) of jun mRNA. Binds to the embryonic deadenylation element (EDEN) motif localized in the 3'-UTR of maternal mRNAs. Binds to RNA containing several repeats of the consensus sequence 5'-UGU-3'. EDEN-dependent deadenylation is enhanced by the presence of an additional cis element composed of three AUU repeats. The chain is CUGBP Elav-like family member 1-A (cugbp1-a) from Xenopus laevis (African clawed frog).